Here is a 337-residue protein sequence, read N- to C-terminus: Protein LEG1 homolog (337 aa).

Positions 1 to 20 are cleaved as a signal peptide; sequence MAVLASWVWVLAGCFCAAVA. Asparagine 171 carries N-linked (GlcNAc...) asparagine glycosylation.

Belongs to the LEG1 family.

Its subcellular location is the secreted. In terms of biological role, may be involved in early liver development. The chain is Protein LEG1 homolog from Mus musculus (Mouse).